The primary structure comprises 155 residues: MKVASGSTATAAAGPSCALKAGKTASGAGEVVRCLSEQSVAISRCAGGAGARLPALLDEQQVNVLLYDMNGCYSRLKELVPTLPQNRKVSKVEILQHVIDYIRDLQLELNSESEVGTPGGRGLPVRAPLSTLNGEISALTAEAACVPADDRILCR.

The bHLH domain maps to Leu53–Leu105. A Nuclear export signal motif is present at residues Val98 to Ser111.

In terms of assembly, heterodimer with other HLH proteins. Interacts with COPS5, IFI204, GATA4 and NKX2-5. Interacts with CLOCK and BMAL1.

Its subcellular location is the cytoplasm. It is found in the nucleus. Transcriptional regulator (lacking a basic DNA binding domain) which negatively regulates the basic helix-loop-helix (bHLH) transcription factors by forming heterodimers and inhibiting their DNA binding and transcriptional activity. Implicated in regulating a variety of cellular processes, including cellular growth, senescence, differentiation, apoptosis, angiogenesis, and neoplastic transformation. Inhibits skeletal muscle and cardiac myocyte differentiation. Regulates the circadian clock by repressing the transcriptional activator activity of the CLOCK-BMAL1 heterodimer. In Homo sapiens (Human), this protein is DNA-binding protein inhibitor ID-1 (ID1).